The following is a 178-amino-acid chain: Large ribosomal subunit protein uL6 (178 aa).

It belongs to the universal ribosomal protein uL6 family. Part of the 50S ribosomal subunit.

This protein binds to the 23S rRNA, and is important in its secondary structure. It is located near the subunit interface in the base of the L7/L12 stalk, and near the tRNA binding site of the peptidyltransferase center. The protein is Large ribosomal subunit protein uL6 of Symbiobacterium thermophilum (strain DSM 24528 / JCM 14929 / IAM 14863 / T).